The sequence spans 449 residues: 8-oxoguanine deaminase (449 aa).

Residues His64 and His66 each coordinate Zn(2+). Gln69 provides a ligand contact to substrate. His232 is a Zn(2+) binding site. Substrate contacts are provided by Glu235 and His269. The Zn(2+) site is built by His269 and Asp320.

The protein belongs to the metallo-dependent hydrolases superfamily. ATZ/TRZ family. As to quaternary structure, homodimer. It depends on Zn(2+) as a cofactor.

The catalysed reaction is 8-oxoguanine + H2O + H(+) = urate + NH4(+). It functions in the pathway purine metabolism. Specifically deaminates 8-Oxoguanine (8-oxoG) to uric acid. 8-oxoG is formed via the oxidation of guanine within DNA by reactive oxygen species and leads, if uncorrected, to the incorporation of 8-oxoG:A mismatches and eventually to G:C to T:A transversions. This is 8-oxoguanine deaminase from Pseudomonas aeruginosa (strain ATCC 15692 / DSM 22644 / CIP 104116 / JCM 14847 / LMG 12228 / 1C / PRS 101 / PAO1).